The following is a 108-amino-acid chain: Succinate dehydrogenase assembly factor 4, mitochondrial (108 aa).

The segment covering 33–46 has biased composition (low complexity); that stretch reads NNNNNNNNNNNNNN. Disordered stretches follow at residues 33–59 and 79–108; these read NNNN…KENQ and NPIT…VSDF. Basic and acidic residues predominate over residues 95-108; sequence RYNDWERNGRVSDF.

Belongs to the SDHAF4 family. As to quaternary structure, interacts with SdhA in its FAD-bound form.

It is found in the mitochondrion matrix. Functionally, plays an essential role in the assembly of succinate dehydrogenase (SDH), an enzyme complex (also referred to as respiratory complex II) that is a component of both the tricarboxylic acid (TCA) cycle and the mitochondrial electron transport chain, and which couples the oxidation of succinate to fumarate with the reduction of ubiquinone (coenzyme Q) to ubiquinol. Binds to the flavoprotein subunit SdhA in its FAD-bound form, blocking the generation of excess reactive oxygen species (ROS) and facilitating its assembly with the iron-sulfur protein subunit SdhB into the SDH catalytic dimer. The protein is Succinate dehydrogenase assembly factor 4, mitochondrial of Dictyostelium discoideum (Social amoeba).